A 171-amino-acid chain; its full sequence is MDYFTLFGLPARYQLDTQALSLRFQDLQRQYHPDKFASGSQAEQLAAVQQSATINQAWQTLRHPLMRAEYLLSLHGFDLACEQHTVRDTAFLMEQLELREELDEIEQAKDEARLESFIKRVKKMFDTRHQLMVEQLDNETWDAAADTVRKLRFLDKLRSSAEQLEEKLLDF.

Residues Asp2 to Leu74 enclose the J domain.

It belongs to the HscB family. Interacts with HscA and stimulates its ATPase activity. Interacts with IscU.

Functionally, co-chaperone involved in the maturation of iron-sulfur cluster-containing proteins. Seems to help targeting proteins to be folded toward HscA. In Escherichia coli (strain SMS-3-5 / SECEC), this protein is Co-chaperone protein HscB.